Reading from the N-terminus, the 557-residue chain is Ras-specific guanine nucleotide-releasing factor RalGPS2 (557 aa).

Residues 49-287 (TPEEYAGQIT…YKLSLKIEPG (239 aa)) form the Ras-GEF domain. The disordered stretch occupies residues 283–314 (KIEPGTSTPRSAASREDLVGPEVGASPQSGRK). Phosphoserine is present on residues Ser-293, Ser-296, Ser-308, and Ser-311. Phosphothreonine is present on Thr-326. Residues 327–330 (PPSP) carry the PXXP motif. Phosphoserine occurs at positions 329 and 343. Phosphothreonine is present on Thr-361. The disordered stretch occupies residues 368-409 (RHLLDDSVMEPHAPSRGQAESSTLSSGISIGSSDGSELSEET). Ser-374 is subject to Phosphoserine. A compositionally biased stretch (low complexity) spans 387 to 403 (ESSTLSSGISIGSSDGS). The PH domain occupies 431–543 (AVTIQGVLRR…WFKHLSAACQ (113 aa)). The required for stimulation of nucleotide exchange by RALA stretch occupies residues 433–557 (TIQGVLRRKT…QVPTNLMTFE (125 aa)).

In terms of assembly, interacts with the SH3 domains of GRB2 and PLCG1. Interacts with RALA.

It is found in the cytoplasm. The protein localises to the cell membrane. Its function is as follows. Guanine nucleotide exchange factor for the small GTPase RALA. May be involved in cytoskeletal organization. May also be involved in the stimulation of transcription in a Ras-independent fashion. In Macaca fascicularis (Crab-eating macaque), this protein is Ras-specific guanine nucleotide-releasing factor RalGPS2 (RALGPS2).